A 420-amino-acid polypeptide reads, in one-letter code: Glucose-1-phosphate adenylyltransferase (420 aa).

Alpha-D-glucose 1-phosphate-binding positions include Y107, G172, 187 to 188, and S205; that span reads EK.

Belongs to the bacterial/plant glucose-1-phosphate adenylyltransferase family. In terms of assembly, homotetramer.

The catalysed reaction is alpha-D-glucose 1-phosphate + ATP + H(+) = ADP-alpha-D-glucose + diphosphate. The protein operates within glycan biosynthesis; glycogen biosynthesis. Its function is as follows. Involved in the biosynthesis of ADP-glucose, a building block required for the elongation reactions to produce glycogen. Catalyzes the reaction between ATP and alpha-D-glucose 1-phosphate (G1P) to produce pyrophosphate and ADP-Glc. In Rhizobium etli (strain CIAT 652), this protein is Glucose-1-phosphate adenylyltransferase.